A 1203-amino-acid polypeptide reads, in one-letter code: DNA-directed RNA polymerase subunit beta' (1203 aa).

Zn(2+) contacts are provided by C60, C62, C75, and C78. The Mg(2+) site is built by D449, D451, and D453. Zn(2+)-binding residues include C818, C892, C899, and C902.

This sequence belongs to the RNA polymerase beta' chain family. The RNAP catalytic core consists of 2 alpha, 1 beta, 1 beta' and 1 omega subunit. When a sigma factor is associated with the core the holoenzyme is formed, which can initiate transcription. The cofactor is Mg(2+). Zn(2+) is required as a cofactor.

The catalysed reaction is RNA(n) + a ribonucleoside 5'-triphosphate = RNA(n+1) + diphosphate. Its function is as follows. DNA-dependent RNA polymerase catalyzes the transcription of DNA into RNA using the four ribonucleoside triphosphates as substrates. The sequence is that of DNA-directed RNA polymerase subunit beta' from Bacillus anthracis.